The following is a 253-amino-acid chain: 1-(5-phosphoribosyl)-5-[(5-phosphoribosylamino)methylideneamino] imidazole-4-carboxamide isomerase (253 aa).

Catalysis depends on D8, which acts as the Proton acceptor. D129 functions as the Proton donor in the catalytic mechanism.

It belongs to the HisA/HisF family.

The protein localises to the cytoplasm. The catalysed reaction is 1-(5-phospho-beta-D-ribosyl)-5-[(5-phospho-beta-D-ribosylamino)methylideneamino]imidazole-4-carboxamide = 5-[(5-phospho-1-deoxy-D-ribulos-1-ylimino)methylamino]-1-(5-phospho-beta-D-ribosyl)imidazole-4-carboxamide. The protein operates within amino-acid biosynthesis; L-histidine biosynthesis; L-histidine from 5-phospho-alpha-D-ribose 1-diphosphate: step 4/9. The sequence is that of 1-(5-phosphoribosyl)-5-[(5-phosphoribosylamino)methylideneamino] imidazole-4-carboxamide isomerase from Microcystis aeruginosa (strain NIES-843 / IAM M-2473).